Consider the following 133-residue polypeptide: Large ribosomal subunit protein uL22 (133 aa).

Belongs to the universal ribosomal protein uL22 family. Part of the 50S ribosomal subunit.

In terms of biological role, this protein binds specifically to 23S rRNA; its binding is stimulated by other ribosomal proteins, e.g. L4, L17, and L20. It is important during the early stages of 50S assembly. It makes multiple contacts with different domains of the 23S rRNA in the assembled 50S subunit and ribosome. Functionally, the globular domain of the protein is located near the polypeptide exit tunnel on the outside of the subunit, while an extended beta-hairpin is found that lines the wall of the exit tunnel in the center of the 70S ribosome. The protein is Large ribosomal subunit protein uL22 of Borrelia garinii subsp. bavariensis (strain ATCC BAA-2496 / DSM 23469 / PBi) (Borreliella bavariensis).